The following is a 98-amino-acid chain: Plastocyanin (98 aa).

The 98-residue stretch at 1 to 98 (AQIVKLGGDD…AGMKMTITVQ (98 aa)) folds into the Plastocyanin-like domain. Cu cation-binding residues include histidine 38, cysteine 83, histidine 86, and methionine 91.

It belongs to the plastocyanin family. Cu(2+) serves as cofactor.

It is found in the plastid. It localises to the chloroplast thylakoid membrane. Participates in electron transfer between P700 and the cytochrome b6-f complex in photosystem I. This Ulva arasakii (Sea lettuce) protein is Plastocyanin (PETE).